Here is a 157-residue protein sequence, read N- to C-terminus: MGFPKVERLLINYKTLDEFKKFKGCGAQELSMLEELQANIIENNSESPFYGIYYGGSLIARMSLYMKRNGGEPFEITGTYLELYKLEVLPTFQKQGFGEMLVNYAKGLQFPIKTIARIHSAGFWDKLNFQPVSVPDGDFYVWHPETNLNTVTNEESA.

An N-acetyltransferase domain is found at 9–146 (LLINYKTLDE…GDFYVWHPET (138 aa)).

This is an uncharacterized protein from Bacillus cereus (strain ATCC 10987 / NRS 248).